We begin with the raw amino-acid sequence, 552 residues long: MHCERFLCVLRIIGTTLFGVSLLLGITAAYIVGYQFIQTDNYYFSFGLYGAFLASHLIIQSLFAFLEHRKMKKSLETPIKLNKTVALCIAAYQEDPDYLRKCLQSVKRLTYPGIKVVMVIDGNSDDDLYMMDIFSEVMGRDKSATYIWKNNFHEKGPGETEESHKESSQHVTQLVLSNKSICIMQKWGGKREVMYTAFRALGRSVDYVQVCDSDTMLDPASSVEMVKVLEEDPMVGGVGGDVQILNKYDSWISFLSSVRYWMAFNIERACQSYFGCVQCISGPLGMYRNSLLHEFVEDWYNQEFMGNQCSFGDDRHLTNRVLSLGYATKYTARSKCLTETPIEYLRWLNQQTRWSKSYFREWLYNAMWFHKHHLWMTYEAVITGFFPFFLIATVIQLFYRGKIWNILLFLLTVQLVGLIKSSFASCLRGNIVMVFMSLYSVLYMSSLLPAKMFAIATINKAGWGTSGRKTIVVNFIGLIPVSVWFTILLGGVIFTIYKESKKPFSESKQTVLIVGTLIYACYWVMLLTLYVVLINKCGRRKKGQQYDMVLDV.

Over 1–11 (MHCERFLCVLR) the chain is Cytoplasmic. Residues 12-32 (IIGTTLFGVSLLLGITAAYIV) form a helical membrane-spanning segment. The Extracellular segment spans residues 33–45 (GYQFIQTDNYYFS). Residues 46-66 (FGLYGAFLASHLIIQSLFAFL) form a helical membrane-spanning segment. Residues 67-374 (EHRKMKKSLE…NAMWFHKHHL (308 aa)) are Cytoplasmic-facing. The residue at position 110 (Thr-110) is a Phosphothreonine. Lys-190 is covalently cross-linked (Glycyl lysine isopeptide (Lys-Gly) (interchain with G-Cter in ubiquitin)). Ser-221 carries an O-linked (GlcNAc) serine glycan. The residue at position 328 (Thr-328) is a Phosphothreonine. A helical transmembrane segment spans residues 375 to 395 (WMTYEAVITGFFPFFLIATVI). Residues 396 to 402 (QLFYRGK) lie on the Extracellular side of the membrane. A helical transmembrane segment spans residues 403 to 423 (IWNILLFLLTVQLVGLIKSSF). Topologically, residues 424–429 (ASCLRG) are cytoplasmic. The helical transmembrane segment at 430-450 (NIVMVFMSLYSVLYMSSLLPA) threads the bilayer. Topologically, residues 451–475 (KMFAIATINKAGWGTSGRKTIVVNF) are extracellular. A helical membrane pass occupies residues 476 to 496 (IGLIPVSVWFTILLGGVIFTI). Residues 497 to 510 (YKESKKPFSESKQT) are Cytoplasmic-facing. A helical transmembrane segment spans residues 511 to 531 (VLIVGTLIYACYWVMLLTLYV). Residues 532-552 (VLINKCGRRKKGQQYDMVLDV) lie on the Extracellular side of the membrane.

This sequence belongs to the NodC/HAS family. As to quaternary structure, homodimer; dimerization promotes enzymatic activity. Forms heterodimer with HAS3. Forms heterodimer with HAS1. Mg(2+) serves as cofactor. Post-translationally, phosphorylation at Thr-328 is essential for hyaluronan synthase activity. In terms of processing, O-GlcNAcylation at Ser-221 increases the stability of HAS2 and plasma membrane localization. Ubiquitination at Lys-190; this ubiquitination is essential for hyaluronan synthase activity and homo- or hetero-oligomerization. Can also be poly-ubiquitinated. Deubiquitinated by USP17L22/USP17 and USP4. USP17L22/USP17 efficiently removes 'Lys-63'- and 'Lys-48'-linked polyubiquitin chains, whereas USP4 preferentially removes monoubiquitination and, partially, both 'Lys-63'- and 'Lys-48'-linked polyubiquitin chain. As to expression, expressed in heart, brain, spleen, lung and skeletal muscle.

It is found in the cell membrane. The protein localises to the endoplasmic reticulum membrane. The protein resides in the vesicle. It localises to the golgi apparatus membrane. Its subcellular location is the lysosome. It carries out the reaction [hyaluronan](n) + UDP-N-acetyl-alpha-D-glucosamine = N-acetyl-beta-D-glucosaminyl-(1-&gt;4)-[hyaluronan](n) + UDP + H(+). The catalysed reaction is N-acetyl-beta-D-glucosaminyl-(1-&gt;4)-[hyaluronan](n) + UDP-alpha-D-glucuronate = [hyaluronan](n+1) + UDP + H(+). It participates in glycan biosynthesis; hyaluronan biosynthesis. Catalyzes the addition of GlcNAc or GlcUA monosaccharides to the nascent hyaluronan polymer. Therefore, it is essential to hyaluronan synthesis a major component of most extracellular matrices that has a structural role in tissues architectures and regulates cell adhesion, migration and differentiation. This is one of the isozymes catalyzing that reaction and it is particularly responsible for the synthesis of high molecular mass hyaluronan. Required for the transition of endocardial cushion cells into mesenchymal cells, a process crucial for heart development. May also play a role in vasculogenesis. High molecular mass hyaluronan also play a role in early contact inhibition a process which stops cell growth when cells come into contact with each other or the extracellular matrix. In terms of biological role, catalyzes the addition of GlcNAc or GlcUA monosaccharides to the nascent hyaluronan polymer. Therefore, it is essential to hyaluronan synthesis a major component of most extracellular matrices that has a structural role in tissues architectures and regulates cell adhesion, migration and differentiation. This is one of three isoenzymes responsible for cellular hyaluronan synthesis and it is particularly responsible for the synthesis of high molecular mass hyaluronan. The polypeptide is Hyaluronan synthase 2 (Mus musculus (Mouse)).